The primary structure comprises 142 residues: Large ribosomal subunit protein uL11 (142 aa).

This sequence belongs to the universal ribosomal protein uL11 family. In terms of assembly, part of the ribosomal stalk of the 50S ribosomal subunit. Interacts with L10 and the large rRNA to form the base of the stalk. L10 forms an elongated spine to which L12 dimers bind in a sequential fashion forming a multimeric L10(L12)X complex. One or more lysine residues are methylated.

Forms part of the ribosomal stalk which helps the ribosome interact with GTP-bound translation factors. This is Large ribosomal subunit protein uL11 from Mycoplasma capricolum subsp. capricolum (strain California kid / ATCC 27343 / NCTC 10154).